The following is a 252-amino-acid chain: MKVLNLGSKKQASFYVACELYKEMAFNQHCKLGLATGGTMTDLYEQLVKLLNKNQLNVDNVSTFNLDEYVGLTASHPQSYHYYMDDMLFKQYPYFNRKNIHIPNGDAYDMNAEASTYNDVLEQQGQRDIQILGIGENGHIGFNEPGTPFDSVTHIVDLTESTIKANSRYFENEDDVPKQAISMGLANILQAKRIILLAFGEKKRAAITHLLNQEISVDVPATLLHKHPNVEIYLDDEACPKNVAKIHVDEMD.

The active-site Proton acceptor; for enolization step is the Asp67. The active-site For ring-opening step is the Asn137. The active-site Proton acceptor; for ring-opening step is His139. Glu144 (for ring-opening step) is an active-site residue.

It belongs to the glucosamine/galactosamine-6-phosphate isomerase family. NagB subfamily.

The enzyme catalyses alpha-D-glucosamine 6-phosphate + H2O = beta-D-fructose 6-phosphate + NH4(+). It participates in amino-sugar metabolism; N-acetylneuraminate degradation; D-fructose 6-phosphate from N-acetylneuraminate: step 5/5. Catalyzes the reversible isomerization-deamination of glucosamine 6-phosphate (GlcN6P) to form fructose 6-phosphate (Fru6P) and ammonium ion. The sequence is that of Glucosamine-6-phosphate deaminase from Staphylococcus aureus (strain MRSA252).